Reading from the N-terminus, the 224-residue chain is TM2 domain-containing protein amaretto (224 aa).

An N-terminal signal peptide occupies residues 1-18 (MRIFYGLLAFLVARQHDA). The Extracellular portion of the chain corresponds to 19–154 (QAIQARSDKE…FLRAGVPCVR (136 aa)). N-linked (GlcNAc...) asparagine glycosylation is found at N102 and N142. A helical membrane pass occupies residues 155-175 (YTDHYFVTTLIYSMLLGFLGM). The region spanning 157 to 205 (DHYFVTTLIYSMLLGFLGMDRFCLGQTGTAVGKLLTMGGVGVWWIIDVI) is the TM2 domain. Residues 176-189 (DRFCLGQTGTAVGK) lie on the Cytoplasmic side of the membrane. The chain crosses the membrane as a helical span at residues 190 to 210 (LLTMGGVGVWWIIDVILLITN). At 211 to 224 (NLLPEDGSNWNPYV) the chain is on the extracellular side.

This sequence belongs to the TM2 family.

It localises to the membrane. Functionally, positive regulator of Notch signaling. Maternal neurogenic factor involved in Notch signaling-dependent neuroectodermal specification during early embryogenesis. Functions cooperatively with amx/TM2D3 and bisc/TM2D1. This is TM2 domain-containing protein amaretto from Drosophila melanogaster (Fruit fly).